We begin with the raw amino-acid sequence, 681 residues long: Phenylalanine--tRNA ligase beta subunit (681 aa).

Positions 288–363 (PARETVLLRP…RIHGYDQIPE (76 aa)) constitute a B5 domain. Residues aspartate 341, aspartate 347, glutamate 350, and glutamate 351 each contribute to the Mg(2+) site. One can recognise an FDX-ACB domain in the interval 586–681 (SSFPSIQRDL…EKQLEAVLLR (96 aa)).

This sequence belongs to the phenylalanyl-tRNA synthetase beta subunit family. Type 1 subfamily. Tetramer of two alpha and two beta subunits. The cofactor is Mg(2+).

Its subcellular location is the cytoplasm. The catalysed reaction is tRNA(Phe) + L-phenylalanine + ATP = L-phenylalanyl-tRNA(Phe) + AMP + diphosphate + H(+). The polypeptide is Phenylalanine--tRNA ligase beta subunit (Rhodopirellula baltica (strain DSM 10527 / NCIMB 13988 / SH1)).